The chain runs to 958 residues: Dermatan-sulfate epimerase (958 aa).

Positions 1 to 22 (MRTHTRGAPSVFFICLFCFVSA) are cleaved as a signal peptide. At 23–902 (CVTDENPEVM…APALSASYTR (880 aa)) the chain is on the lumenal side. Residue asparagine 183 is glycosylated (N-linked (GlcNAc...) asparagine). Histidine 205 (proton donor) is an active-site residue. Tyrosine 261 is a catalytic residue. 2 N-linked (GlcNAc...) asparagine glycosylation sites follow: asparagine 336 and asparagine 411. Histidine 452 and glutamate 470 together coordinate Mn(2+). Tyrosine 473 is an active-site residue. Residue asparagine 481 coordinates Mn(2+). N-linked (GlcNAc...) asparagine glycosylation is found at asparagine 642 and asparagine 648. The helical transmembrane segment at 903–923 (LFLILNIAIFFVMLAMQLTYF) threads the bilayer. Topologically, residues 924–933 (QRAQSLHGQR) are cytoplasmic. A helical transmembrane segment spans residues 934-954 (CLYAVLLIDSCILLWLYSSCS). Residues 955–958 (QSQC) lie on the Lumenal side of the membrane.

Belongs to the dermatan-sulfate isomerase family. It depends on Mn(2+) as a cofactor. In terms of processing, N-glycosylated. Glycosylation is important for enzymatic activity.

It localises to the endoplasmic reticulum membrane. Its subcellular location is the golgi apparatus membrane. The protein resides in the cytoplasmic vesicle membrane. The protein localises to the microsome membrane. It carries out the reaction chondroitin 4'-sulfate = dermatan 4'-sulfate. Its pathway is glycan metabolism; chondroitin sulfate biosynthesis. The protein operates within glycan metabolism; heparan sulfate biosynthesis. In terms of biological role, converts D-glucuronic acid to L-iduronic acid (IdoUA) residues. Plays an important role in the biosynthesis of the glycosaminoglycan/mucopolysaccharide dermatan sulfate. The sequence is that of Dermatan-sulfate epimerase (DSE) from Bos taurus (Bovine).